The following is a 582-amino-acid chain: BTB/POZ domain and ankyrin repeat-containing protein NPR1 (582 aa).

Polar residues predominate over residues 1 to 12 (MEPPTSHVTNAF). Residues 1–27 (MEPPTSHVTNAFSDSDSASVEEGDADA) form a disordered region. Positions 55–140 (ADARIAVPGG…VLDYLYSGRV (86 aa)) constitute a BTB domain. Residues 147–161 (ACLCVDEDCAHVGCH) form a C2HC NPR-type zinc finger. The Zn(2+) site is built by Cys150, Cys155, His157, and Cys160. ANK repeat units follow at residues 229–258 (RSNLDMITLEKSLPPDVIKQIIDARLSLGL), 269–299 (KHVRRIHRALDSDDVELVRMLLTEGQTNLDD), 301–328 (FALHYAVEHCDSKITTELLDLALADVNH), and 332–361 (RGYTVLHIAARRREPKIIVSLLTKGARPAD). The salicylic acid-binding core (SBC) stretch occupies residues 391–526 (PSPKDRLCIE…VLDKIMDDET (136 aa)). Residue Arg436 coordinates salicylate. Disordered regions lie at residues 525-544 (ETDPVSLGRDTSAEKRKRFH) and 551-582 (QKAFHEDKEENDRSGLSSSSSSTSIGAIRPRR). Residues 553–563 (AFHEDKEENDR) show a composition bias toward basic and acidic residues. Positions 564-574 (SGLSSSSSSTS) are enriched in low complexity.

It belongs to the plant 'ANKYRIN-BTB/POZ' family. 'NPR1-like' subfamily. In terms of assembly, oligomer in an uninduced state; disulfide-linked. Forms activated monomer upon changes in cellular redox potential. Interacts with TGA2.2. Interacts with NRR.

The protein localises to the cytoplasm. The protein resides in the nucleus. It localises to the nuclear body. Its pathway is protein modification; protein ubiquitination. In terms of biological role, salicylic acid (SA)-binding substrate-specific adapter of an E3 ubiquitin-protein ligase complex (CUL3-RBX1-BTB) which mediates the ubiquitination and subsequent proteasomal degradation of target proteins. Transcription cofactor that represses gene expression in the absence of salicylic acid (SA), when attached to negative cis-elements (W-box) with WRKY transcription factors, but stimulates gene expression upon activation by SA, when sumoylated and attached to positive cis-elements (as-1) with TGA transcription factors, thus confering immunity through a series of gene regulations ending in a significant increase in antimicrobial and defense genes expression. Key positive factor of disease resistance. Involved in defense response against the bacterial blight disease caused by Xanthomonas oryzae pv. oryzae (Xoo). Plants over-expressing NPR1/NH1 acquire high levels of resistance to Xoo, express constitutively defense genes and develop lesion-mimic spots on leaves at pre-flowering stage. Involved in basal resistance to the blast pathogen Magnaporthe oryzae. Plants over-expressing NPR1/NH1 have increased resistance to M.oryzae infection. Plays an essential role in benzothiadiazole (BTH)-induced resistance to the blast fungus disease caused by Magnaporthe oryzae. Functions as a transcriptional coactivator of TGA2.1 and LG2 in vitro. Involved in defense response against herbivore. Plants silencing NPR1/NH1 have increased herbivore-induced trypsin proteinase inhibitors and volatiles, which reduces the performance of the striped stem borer (SSB) Chilo suppressalis. This chain is BTB/POZ domain and ankyrin repeat-containing protein NPR1, found in Oryza sativa subsp. indica (Rice).